The primary structure comprises 521 residues: GMP synthase [glutamine-hydrolyzing] (521 aa).

The 196-residue stretch at 8–203 folds into the Glutamine amidotransferase type-1 domain; sequence KILILDFGAQ…VVDICGCQTL (196 aa). Residue Cys-85 is the Nucleophile of the active site. Active-site residues include His-177 and Glu-179. Residues 204–396 form the GMPS ATP-PPase domain; the sequence is WTAANIIDDQ…LGLPRTMVYR (193 aa). An ATP-binding site is contributed by 231-237; sequence SGGVDSS.

Homodimer.

The enzyme catalyses XMP + L-glutamine + ATP + H2O = GMP + L-glutamate + AMP + diphosphate + 2 H(+). Its pathway is purine metabolism; GMP biosynthesis; GMP from XMP (L-Gln route): step 1/1. In terms of biological role, catalyzes the synthesis of GMP from XMP. This is GMP synthase [glutamine-hydrolyzing] from Xanthomonas oryzae pv. oryzae (strain MAFF 311018).